Consider the following 143-residue polypeptide: Large ribosomal subunit protein uL11 (143 aa).

Belongs to the universal ribosomal protein uL11 family. As to quaternary structure, part of the ribosomal stalk of the 50S ribosomal subunit. Interacts with L10 and the large rRNA to form the base of the stalk. L10 forms an elongated spine to which L12 dimers bind in a sequential fashion forming a multimeric L10(L12)X complex. Post-translationally, one or more lysine residues are methylated.

Its function is as follows. Forms part of the ribosomal stalk which helps the ribosome interact with GTP-bound translation factors. In Burkholderia mallei (strain NCTC 10247), this protein is Large ribosomal subunit protein uL11.